We begin with the raw amino-acid sequence, 84 residues long: Molybdopterin synthase sulfur carrier subunit (84 aa).

The residue at position 84 (G84) is a 1-thioglycine; alternate. G84 carries the post-translational modification Glycyl adenylate; alternate.

This sequence belongs to the MoaD family. MOCS2A subfamily. As to quaternary structure, heterotetramer; composed of 2 small (MOCS2A) and 2 large (MOCS2B) subunits. C-terminal thiocarboxylation occurs in 2 steps, it is first acyl-adenylated (-COAMP) via the hesA/moeB/thiF part of MOCS3, then thiocarboxylated (-COSH) via the rhodanese domain of MOCS3.

The protein resides in the cytoplasm. It participates in cofactor biosynthesis; molybdopterin biosynthesis. Its function is as follows. Acts as a sulfur carrier required for molybdopterin biosynthesis. Component of the molybdopterin synthase complex that catalyzes the conversion of precursor Z into molybdopterin by mediating the incorporation of 2 sulfur atoms into precursor Z to generate a dithiolene group. In the complex, serves as sulfur donor by being thiocarboxylated (-COSH) at its C-terminus by MOCS3. After interaction with MOCS2B, the sulfur is then transferred to precursor Z to form molybdopterin. The sequence is that of Molybdopterin synthase sulfur carrier subunit from Caenorhabditis briggsae.